Consider the following 428-residue polypeptide: D-inositol 3-phosphate glycosyltransferase (428 aa).

Position 17 (His17) interacts with 1D-myo-inositol 3-phosphate. Residues 23-24 (QP) and Gly31 each bind UDP-N-acetyl-alpha-D-glucosamine. 1D-myo-inositol 3-phosphate-binding positions include 28-33 (DAGGMN), Arg86, Tyr119, Thr143, and Arg163. Arg237 and Lys242 together coordinate UDP-N-acetyl-alpha-D-glucosamine. Mg(2+) contacts are provided by Tyr312, Arg313, and Ala315. UDP-N-acetyl-alpha-D-glucosamine contacts are provided by Glu325 and Glu333. Thr339 lines the Mg(2+) pocket.

The protein belongs to the glycosyltransferase group 1 family. MshA subfamily. As to quaternary structure, homodimer.

The catalysed reaction is 1D-myo-inositol 3-phosphate + UDP-N-acetyl-alpha-D-glucosamine = 1D-myo-inositol 2-acetamido-2-deoxy-alpha-D-glucopyranoside 3-phosphate + UDP + H(+). Functionally, catalyzes the transfer of a N-acetyl-glucosamine moiety to 1D-myo-inositol 3-phosphate to produce 1D-myo-inositol 2-acetamido-2-deoxy-glucopyranoside 3-phosphate in the mycothiol biosynthesis pathway. The sequence is that of D-inositol 3-phosphate glycosyltransferase from Thermobispora bispora (strain ATCC 19993 / DSM 43833 / CBS 139.67 / JCM 10125 / KCTC 9307 / NBRC 14880 / R51).